The chain runs to 423 residues: Major royal jelly protein 9 (423 aa).

A signal peptide spans 1-20; it reads MSFNIWWLILYFSIVCQAKA. N-linked (GlcNAc...) asparagine glycosylation is found at Asn110, Asn118, Asn177, Asn196, and Asn345.

It belongs to the major royal jelly protein family. Expressed at very low levels in the hypopharyngeal glands of adult worker bees (at protein level); expression peaks at 12 days post eclosion. Secreted into bee venom in the sting apparatus (at protein level). Expressed in the brains of adult worker bees peaking at 12 days post eclosion (at protein level). Expressed in the spermatheca of adult queen bees (at protein level); expression levels are higher in mated queens than in virgin queens. Along with Mrjp8 expressed at very low levels in the head of worker bees compared to other major royal jelly proteins.

Its subcellular location is the secreted. Its function is as follows. Component of bee sting venom. Component of royal jelly, a substance produced in the hypopharyngeal gland containing proteins, free amino acids, fatty acids, sugars and other nutrients, which is fed to developing larvae by worker nurse bees; may be present only at trace levels. All larvae are fed some royal jelly (also known as worker jelly) early in their development but it forms the principal source of nutrition for larvae destined to become queen bees. Produced in the spermatheca of adult queen bees, along with other major royal jelly proteins, where it may act as a nutrient supply for sperm stored by mated queens, or be involved in energy metabolism. This chain is Major royal jelly protein 9, found in Apis mellifera (Honeybee).